A 1370-amino-acid chain; its full sequence is MPYSYTEKKRIRKSFAKREDVQNVPFLLATQLQSYLTFLQADTATSDRVNEGLQAAFSSIFPIVSHNGMARLEFVSYALGEPVFDVKECQQRGLTYASPLRAKVRLVLLDREVSKPTIKEVKEQEVYMGEIPLMTGTGSFVINGTERVIVSQLHRSPGVFFEHDRGKTHSSGKLLFSARVIPYRGSWLDFEFDPKDVLFFRVDRRRKMPVTILLKAIGMTPESILAHFFDFDNFELKSEGGMMEFVAERWKGEMARFDIADRDGKVIVEKDKRINAKHLRDLAAGGIQRVSVPEDFLYGRVLAKNIVDPDTGEVVAHANDEITESVLNAMRAANVRDIQTLYTNDLDRGPYISQTLRADETADQMAARVAIYRMMRPGEPPTEEAVEALFQRLFYSEETYDLSRVGRMKVNSRLGRGDDSTGPMTLTNEDILETIKVLVELRNGRGQIDDIDHLGNRRVRCVGELAENQFRAGLVRVERAVKERLGQAETENLMPHDLINSKPISAAIKEFFGSSQLSQFMDQTNPLSEITHKRRVSALGPGGLTRERAGFEVRDVHPTHYGRVCPIETPEGPNIGLINSMALYARLNEYGFLETPYRKIIDGKVSDQIDYLSAIEESHYVIAQANAALDDEGRFVDDLVACREAGETMLTAPGNVHYMDVAPSQIVSVAASLIPFLEHDDANRALMGANMQRQAVPCLRPEKPLVGTGVERTVAVDSGTTVQALRGGVVDHVDADRVVIRVNDEENVAGEVGVDIYNLIKYTRSNQNTNINQRPIVARGDKVAKGDVLADGASTDLGELALGQNMLIAFMPWNGYNFEDSILISERVVADDRYTSIHIEELTVVARDTKLGPEEITRDISNLAETQLNRLDDSGIVYIGAEVSADDVLVGKVTPKGETQLTPEEKLLRAIFGEKASDVKDTSLRVPSGMTGTVIDVQVFTREGIVRDKRAQSIIDDELRRYRQDLNDQLRIVENDQFDRIEKMLVGKTVNGGPRKLAKGATLTKAYLADLDRWQWFDIRLADEQHAVVLEQAKESLEQKRHQFDLAFEEKRKKLTQGDELPPGVLKMIKVYLAVKRRLQPGDKMAGRHGNKGVVSRITPVEDMPHMADGTPADIVLNPLGVPSRMNVGQVLEVHLGWAAKGVGYRIADMLRDERTAQAKSVRGYLEKVYNTTGSSAHIDSLTDEEVLELANNLKKGVPFATPVFDGATEEEIGKMLELAYPDDVAARMRLTASRSQAWLYDGRTGEQFERPVTIGYMHYLKLHHLVDDKMHARSTGPYSLVTQQPLGGKAQFGGQRFGEMEVWALEAYGASYTLQEMLTVKSDDITGRTKVYENIVKGDHVIDAGMPESFNVLVKEIRSLALDMDLERN.

Belongs to the RNA polymerase beta chain family. As to quaternary structure, the RNAP catalytic core consists of 2 alpha, 1 beta, 1 beta' and 1 omega subunit. When a sigma factor is associated with the core the holoenzyme is formed, which can initiate transcription.

The enzyme catalyses RNA(n) + a ribonucleoside 5'-triphosphate = RNA(n+1) + diphosphate. Functionally, DNA-dependent RNA polymerase catalyzes the transcription of DNA into RNA using the four ribonucleoside triphosphates as substrates. This chain is DNA-directed RNA polymerase subunit beta, found in Bordetella pertussis (strain Tohama I / ATCC BAA-589 / NCTC 13251).